The chain runs to 344 residues: MTAREGRAPLVRRVAVYGAVGLAAIAGVAIWSGAASHRGADTARLSADAAARDGASAASPPPALPASAGLPAPLAGSSAPRLPLDAGGHLAKSRAVRDFFDYCLSARSDLSATALDALVVRGIAAQLDGTIAQPEALDVWHRYRAYLDALAKLPDAGAVDKSDLGALQLALDQRVSIAYRTLGDWSQPFFGAEQWRQRYDLARLKIAQDRTLTEAQKAERLAALAQQMPADERAARQKADRQQAAIDQIAQLQKSGATPDAMRAQLTQTLGPDAAARVAQMQQDDASWQSRYADYAAQRAQIDAAGLSPQDRDAQIASLRQRMFTKPGEAVRAASLDRGAAAAR.

The chain crosses the membrane as a helical span at residues 14-34; the sequence is VAVYGAVGLAAIAGVAIWSGA.

Belongs to the lipase chaperone family.

The protein resides in the cell inner membrane. May be involved in the folding of the extracellular lipase during its passage through the periplasm. This is Lipase chaperone from Burkholderia ambifaria (strain MC40-6).